The chain runs to 319 residues: Cell surface A33 antigen (319 aa).

A signal peptide spans 1–21 (MVGKMWPVLWTLCAVRVTVDA). Residues 22 to 134 (ISVETPQDVL…LEGNTKSRVR (113 aa)) form the Ig-like V-type domain. The Extracellular portion of the chain corresponds to 22–235 (ISVETPQDVL…VAVRSPSMNV (214 aa)). Disulfide bonds link C43–C117, C146–C222, and C162–C211. N-linked (GlcNAc...) asparagine glycosylation is found at N112, N200, and N223. Residues 140-227 (PPSKPECGIE…GTQFCNITVA (88 aa)) form the Ig-like C2-type domain. Residues 236 to 256 (ALYVGIAVGVVAALIIIGIII) traverse the membrane as a helical segment. Residues 257–319 (YCCCCRGKDD…GRESPDHLDQ (63 aa)) lie on the Cytoplasmic side of the membrane. Basic and acidic residues-rich tracts occupy residues 267–295 (NTED…SRER) and 303–319 (QEEQ…HLDQ). Residues 267-319 (NTEDKEDARPNREAYEEPPEQLRELSREREEEDDYRQEEQRSTGRESPDHLDQ) are disordered.

In terms of processing, N-glycosylated, contains approximately 8 kDa of N-linked carbohydrate. Post-translationally, palmitoylated. In terms of tissue distribution, expressed in normal gastrointestinal epithelium and in 95% of colon cancers.

Its subcellular location is the membrane. May play a role in cell-cell recognition and signaling. The polypeptide is Cell surface A33 antigen (GPA33) (Homo sapiens (Human)).